The sequence spans 146 residues: Type II secretion system core protein G (146 aa).

Positions 1-9 are cleaved as a propeptide — leader sequence; it reads MKKMRKQTG. The residue at position 10 (F10) is an N-methylphenylalanine. Residues 10-30 traverse the membrane as a helical segment; it reads FTLLEVMVVVVILGILASFVV.

This sequence belongs to the GSP G family. As to quaternary structure, type II secretion system is composed of four main components: the outer membrane complex, the inner membrane complex, the cytoplasmic secretion ATPase and the periplasm-spanning pseudopilus. Forms homomultimers. Interacts with EspL. In terms of processing, cleaved by the prepilin peptidase. Methylated by prepilin peptidase at the amino group of the N-terminal phenylalanine once the leader sequence is cleaved.

The protein localises to the cell inner membrane. Core component of the type II secretion system required for the energy-dependent secretion of extracellular factors such as proteases and toxins from the periplasm. Pseudopilin (pilin-like) protein that polymerizes to form the pseudopilus. Further polymerization triggers pseudopilus growth. This chain is Type II secretion system core protein G (epsG), found in Vibrio cholerae serotype O1 (strain ATCC 39315 / El Tor Inaba N16961).